Here is a 277-residue protein sequence, read N- to C-terminus: Radial spoke head protein 9 homolog (277 aa).

The protein belongs to the flagellar radial spoke RSP9 family. Component of axonemal radial spoke complexes.

The protein resides in the cytoplasm. The protein localises to the cytoskeleton. It localises to the cilium axoneme. Its subcellular location is the flagellum axoneme. It is found in the cell projection. The protein resides in the kinocilium. Functionally, functions as part of axonemal radial spoke complexes that play an important part in the motility of sperm and cilia. Required for motility of olfactory and neural cilia and for the structural integrity of ciliary axonemes in both 9+0 and 9+2 motile cilia. Essential for both the radial spoke head assembly and the central pair microtubule stability in ependymal motile cilia. This Danio rerio (Zebrafish) protein is Radial spoke head protein 9 homolog (rsph9).